The primary structure comprises 41 residues: Large ribosomal subunit protein bL36 (41 aa).

It belongs to the bacterial ribosomal protein bL36 family.

The protein is Large ribosomal subunit protein bL36 of Gluconacetobacter diazotrophicus (strain ATCC 49037 / DSM 5601 / CCUG 37298 / CIP 103539 / LMG 7603 / PAl5).